The primary structure comprises 589 residues: Serine/threonine-protein phosphatase 2A 65 kDa regulatory subunit A alpha isoform (589 aa).

An N-acetylalanine modification is found at alanine 2. HEAT repeat units follow at residues 8-46, 47-84, 85-123, 124-161, 162-200, 201-239, 240-278, 279-321, 322-360, 361-399, 400-438, 439-477, 478-516, 517-555, and 556-589; these read DSLYPIAVLIDELRNEDVQLRLNSIKKLSTIALALGVER, TRSELLPFLTDTIYDEDEVLLALAEQLGTFTTLVGGPE, YVHCLLPPLESLATVEETVVRDKAVESLRAISHEHSPSD, LEAHFVPLVKRLAGGDWFTSRTSACGLFSVCYPRVSSA, VKAELRQYFRNLCSDDTPMVRRAAASKLGEFAKVLELDN, VKSEIIPMFSNLASDEQDSVRLLAVEACVNIAQLLPQED, LEALVMPTLRQAAEDKSWRVRYMVADKFTELHKAVGPEI, TKTD…RENV, IMTQILPCIKELVSDANQHVKSALASVIMGLSPILGKDS, TIEHLLPLFLAQLKDECPEVRLNIISNLDCVNEVIGIRQ, LSQSLLPAIVELAEDAKWRVRLAIIEYMPLLAGQLGVEF, FDEKLNSLCMAWLVDHVYAIREAATSNLKKLVEKFGKEW, AHATIIPKVLAMSGDPNYLHRMTTLFCINVLSEVCGQDI, TTKHMLPTVLRMAGDPVANVRFNVAKSLQKIGPILDNST, and LQSEVKPVLEKLTQDQDVDVKYFAQEALTVLSLA. Positions 8 to 399 are PP2A subunit B binding; that stretch reads DSLYPIAVLI…CVNEVIGIRQ (392 aa). The segment at 47–321 is polyoma small and medium T antigens Binding; it reads TRSELLPFLT…NLSADCRENV (275 aa). The interval 85–239 is SV40 small T antigen binding; sequence YVHCLLPPLE…NIAQLLPQED (155 aa). Lysine 280 is modified (N6-acetyllysine). The segment at 400–589 is PP2A subunit C binding; the sequence is LSQSLLPAIV…QEALTVLSLA (190 aa).

The protein belongs to the phosphatase 2A regulatory subunit A family. In terms of assembly, PP2A consists of a common heterodimeric core enzyme, composed of PPP2CA a 36 kDa catalytic subunit (subunit C) and PPP2R1A a 65 kDa constant regulatory subunit (PR65 or subunit A), that associates with a variety of regulatory subunits. Proteins that associate with the core dimer include three families of regulatory subunits B (the R2/B/PR55/B55, R3/B''/PR72/PR130/PR59 and R5/B'/B56 families), the 48 kDa variable regulatory subunit, viral proteins, and cell signaling molecules. Found in a complex with at least ARL2, PPP2CB, PPP2R1A, PPP2R2A, PPP2R5E and TBCD. Interacts with the PP2A C catalytic subunit PPP2CA. Interacts with the PP2A B subunit PPP2R2A. Interacts with the PP2A B subunit PPP2R5D. Interacts with FOXO1; the interaction dephosphorylates FOXO1 on AKT-mediated phosphorylation sites. Interacts with IPO9. Interacts with TP53 and SGO1. Interacts with PLA2G16; this interaction might decrease PP2A activity. Interacts with CTTNBP2NL. Interacts with GNA12; the interaction promotes protein phosphatase 2A activation causing dephosphorylation of MAPT. Interacts with CIP2A; this interaction stabilizes CIP2A. Interacts with PABIR1/FAM122A. Interacts with ADCY8; antagonizes interaction between ADCY8 and calmodulin. Interacts with CRTC3 (when phosphorylated at 'Ser-391'). Interacts with SPRY2. Part of the core of STRIPAK complexes composed of PP2A catalytic and scaffolding subunits, the striatins (PP2A regulatory subunits), the striatin-associated proteins MOB4, STRIP1 and STRIP2, PDCD10 and members of the STE20 kinases, such as STK24 and STK26. Component of the Integrator-PP2A (INTAC) complex, composed of the Integrator core complex and protein phosphatase 2A subunits PPP2CA and PPP2R1A.

It localises to the cytoplasm. The protein resides in the nucleus. It is found in the chromosome. The protein localises to the centromere. Its subcellular location is the lateral cell membrane. It localises to the cell projection. The protein resides in the dendrite. In terms of biological role, the PR65 subunit of protein phosphatase 2A serves as a scaffolding molecule to coordinate the assembly of the catalytic subunit and a variable regulatory B subunit. Upon interaction with GNA12 promotes dephosphorylation of microtubule associated protein TAU/MAPT. Required for proper chromosome segregation and for centromeric localization of SGO1 in mitosis. Together with RACK1 adapter, mediates dephosphorylation of AKT1 at 'Ser-473', preventing AKT1 activation and AKT-mTOR signaling pathway. Dephosphorylation of AKT1 is essential for regulatory T-cells (Treg) homeostasis and stability. Part of the striatin-interacting phosphatase and kinase (STRIPAK) complexes. STRIPAK complexes have critical roles in protein (de)phosphorylation and are regulators of multiple signaling pathways including Hippo, MAPK, nuclear receptor and cytoskeleton remodeling. Different types of STRIPAK complexes are involved in a variety of biological processes such as cell growth, differentiation, apoptosis, metabolism and immune regulation. Key mediator of a quality checkpoint during transcription elongation as part of the Integrator-PP2A (INTAC) complex. The INTAC complex drives premature transcription termination of transcripts that are unfavorably configured for transcriptional elongation: within the INTAC complex, acts as a scaffolding subunit for PPP2CA, which catalyzes dephosphorylation of the C-terminal domain (CTD) of Pol II subunit POLR2A/RPB1 and SUPT5H/SPT5, thereby preventing transcriptional elongation. Regulates the recruitment of the SKA complex to kinetochores. In Bos taurus (Bovine), this protein is Serine/threonine-protein phosphatase 2A 65 kDa regulatory subunit A alpha isoform (PPP2R1A).